Reading from the N-terminus, the 159-residue chain is Heat shock protein beta-9 (159 aa).

In terms of domain architecture, sHSP spans 36 to 147; that stretch reads LLRDSPAAQE…EAQTGPSPRL (112 aa).

The protein belongs to the small heat shock protein (HSP20) family. As to expression, testis specific.

The protein localises to the cytoplasm. Its subcellular location is the nucleus. In Homo sapiens (Human), this protein is Heat shock protein beta-9 (HSPB9).